A 276-amino-acid polypeptide reads, in one-letter code: SKA complex subunit 1 homolog (276 aa).

Residues 48–78 are a coiled coil; the sequence is VDVSLTAMEAQLQAVRRRLQEEREAFPKAKK.

Belongs to the SKA1 family.

The polypeptide is SKA complex subunit 1 homolog (Oryza sativa subsp. indica (Rice)).